Reading from the N-terminus, the 194-residue chain is ATP-dependent Clp protease proteolytic subunit 3 (194 aa).

Catalysis depends on Ser-96, which acts as the Nucleophile. His-121 is a catalytic residue.

It belongs to the peptidase S14 family. In terms of assembly, fourteen ClpP subunits assemble into 2 heptameric rings which stack back to back to give a disk-like structure with a central cavity, resembling the structure of eukaryotic proteasomes.

It is found in the cytoplasm. The catalysed reaction is Hydrolysis of proteins to small peptides in the presence of ATP and magnesium. alpha-casein is the usual test substrate. In the absence of ATP, only oligopeptides shorter than five residues are hydrolyzed (such as succinyl-Leu-Tyr-|-NHMec, and Leu-Tyr-Leu-|-Tyr-Trp, in which cleavage of the -Tyr-|-Leu- and -Tyr-|-Trp bonds also occurs).. Cleaves peptides in various proteins in a process that requires ATP hydrolysis. Has a chymotrypsin-like activity. Plays a major role in the degradation of misfolded proteins. In Prochlorococcus marinus (strain NATL2A), this protein is ATP-dependent Clp protease proteolytic subunit 3.